Consider the following 172-residue polypeptide: MSSARESQARHGLKRAASPDGSGSWQAADLGNEERKQKFLRLMGAGKKEHTGRLVIGDHRSTSHFRTGEEDKKMNEELESQYQQSMDSTMSGRNRRHCGLGFSEFQEGEEEAAGHSSDHESSEDSESGSDSKQDESAEELQAAETHDEAAVPETKKEAKSNYKMMFVKASGS.

Residues 1-160 form a disordered region; that stretch reads MSSARESQAR…VPETKKEAKS (160 aa). Basic and acidic residues predominate over residues 46–76; that stretch reads GKKEHTGRLVIGDHRSTSHFRTGEEDKKMNE. Residues 80–92 show a composition bias toward polar residues; sequence SQYQQSMDSTMSG. Composition is skewed to basic and acidic residues over residues 112–122 and 144–160; these read AAGHSSDHESS and ETHD…EAKS.

It belongs to the SMAP family. As to expression, expressed in brain, heart, eye, liver, kidney and skeletal muscle.

The sequence is that of Small acidic protein (SMAP) from Gallus gallus (Chicken).